Here is a 633-residue protein sequence, read N- to C-terminus: Basic helix-loop-helix ARNT-like protein 1 (633 aa).

Residues 1 to 65 (MADQRMDISS…GMDTDKDDQH (65 aa)) form a disordered region. Residue Ser17 is modified to Phosphoserine; by GSK3-beta. A compositionally biased stretch (polar residues) spans 24 to 33 (ISSSLSTSGV). The Nuclear localization signal signature appears at 36 to 41 (NRKRKG). In terms of domain architecture, bHLH spans 79-132 (NAREAHSQIEKRRRDKMNSFIDELASLVPTCNAMSRKLDKLTVLRMAVQHMKTL). Ser85 is subject to Phosphoserine. Residue Ser97 is modified to Phosphoserine; by CK2. Positions 149 to 159 (LSDDELKHLIL) match the Nuclear export signal 1 motif. The 73-residue stretch at 150–222 (SDDELKHLIL…EQLSSSDTAP (73 aa)) folds into the PAS 1 domain. Lys259 is covalently cross-linked (Glycyl lysine isopeptide (Lys-Gly) (interchain with G-Cter in SUMO2 and SUMO3)). Lys266 is covalently cross-linked (Glycyl lysine isopeptide (Lys-Gly) (interchain with G-Cter in SUMO)). A PAS 2 domain is found at 333-403 (PQPVNGEIRV…ECHRQVLQTR (71 aa)). Residues 368 to 376 (LAYLPQELL) carry the Nuclear export signal 2 motif. Positions 408 to 451 (TNCYKFKIKDGSFITLRSRWFSFMNPWTKEVEYIVSTNTVVSTS) constitute a PAC domain. 2 disordered regions span residues 469 to 499 (SMDSVLQAGEGGPKRSHPTVPGIPGGTRAGA) and 518 to 578 (GSSP…DNSS). The segment covering 518–528 (GSSPSSCGSSP) has biased composition (low complexity). Position 545 is an N6-acetyllysine (Lys545). Residues 563–578 (GQIQDSSGYPYSDNSS) are compositionally biased toward polar residues.

In terms of assembly, component of the circadian clock oscillator which includes the CRY1/2 proteins, CLOCK or NPAS2, BMAL1 or BMAL2, CSNK1D and/or CSNK1E, TIMELESS and the PER1/2/3 proteins. Forms a heterodimer with CLOCK. The CLOCK-BMAL1 heterodimer is required for E-box-dependent transactivation, for CLOCK nuclear translocation and degradation, and, for phosphorylation of both CLOCK and BMAL1. Interacts with PER1, PER2, CRY1 and CRY2 and this interaction requires a translocation to the nucleus. Interaction of the CLOCK-BMAL1 heterodimer with PER or CRY inhibits transcription activation. Interacts with NPAS2. Ubiquitinated, leading to its proteasomal degradation. Deubiquitinated by USP9X. Post-translationally, O-glycosylated; contains O-GlcNAc. O-glycosylation by OGT prevents protein degradation by inhibiting ubiquitination. It also stabilizes the CLOCK-BMAL1 heterodimer thereby increasing CLOCK-BMAL1-mediated transcription of genes in the negative loop of the circadian clock such as PER1/2/3 and CRY1/2. In terms of processing, acetylated on Lys-545 by CLOCK during the repression phase of the circadian cycle. Acetylation facilitates recruitment of CRY1 protein and initiates the repression phase of the circadian cycle. Acetylated at Lys-545 by KAT5 during the activation phase of the cycle, leading to recruitment of the positive transcription elongation factor b (P-TEFb) and BRD4, followed by productive elongation of circadian transcripts. Deacetylated by SIRT1, which may result in decreased protein stability. Phosphorylated upon dimerization with CLOCK. Phosphorylation enhances the transcriptional activity, alters the subcellular localization and decreases the stability of the CLOCK-BMAL1 heterodimer by promoting its degradation. Phosphorylation shows circadian variations in the liver with a peak between CT10 to CT14. Phosphorylation at Ser-97 by CK2 is essential for its nuclear localization, its interaction with CLOCK and controls CLOCK nuclear entry. Dephosphorylation at Ser-85 is important for dimerization with CLOCK and transcriptional activity. Post-translationally, sumoylated on Lys-266 upon dimerization with CLOCK. Predominantly conjugated to poly-SUMO2/3 rather than SUMO1 and the level of these conjugates undergo rhythmic variation, peaking at CT9-CT12. Sumoylation localizes it exclusively to the PML body and promotes its ubiquitination in the PML body, ubiquitin-dependent proteasomal degradation and the transcriptional activity of the CLOCK-BMAL1 heterodimer. In terms of processing, undergoes lysosome-mediated degradation in a time-dependent manner in the liver. Expressed in pineal gland and retina.

The protein localises to the nucleus. It localises to the cytoplasm. Its subcellular location is the PML body. Transcriptional activator which forms a core component of the circadian clock. The circadian clock, an internal time-keeping system, regulates various physiological processes through the generation of approximately 24 hour circadian rhythms in gene expression, which are translated into rhythms in metabolism and behavior. It is derived from the Latin roots 'circa' (about) and 'diem' (day) and acts as an important regulator of a wide array of physiological functions including metabolism, sleep, body temperature, blood pressure, endocrine, immune, cardiovascular, and renal function. Consists of two major components: the central clock, residing in the suprachiasmatic nucleus (SCN) of the brain, and the peripheral clocks that are present in nearly every tissue and organ system. Both the central and peripheral clocks can be reset by environmental cues, also known as Zeitgebers (German for 'timegivers'). The predominant Zeitgeber for the central clock is light, which is sensed by retina and signals directly to the SCN. The central clock entrains the peripheral clocks through neuronal and hormonal signals, body temperature and feeding-related cues, aligning all clocks with the external light/dark cycle. Circadian rhythms allow an organism to achieve temporal homeostasis with its environment at the molecular level by regulating gene expression to create a peak of protein expression once every 24 hours to control when a particular physiological process is most active with respect to the solar day. Transcription and translation of core clock components (CLOCK, NPAS2, BMAL1, BMAL2, PER1, PER2, PER3, CRY1 and CRY2) plays a critical role in rhythm generation, whereas delays imposed by post-translational modifications (PTMs) are important for determining the period (tau) of the rhythms (tau refers to the period of a rhythm and is the length, in time, of one complete cycle). A diurnal rhythm is synchronized with the day/night cycle, while the ultradian and infradian rhythms have a period shorter and longer than 24 hours, respectively. Disruptions in the circadian rhythms contribute to the pathology of cardiovascular diseases, cancer, metabolic syndromes and aging. A transcription/translation feedback loop (TTFL) forms the core of the molecular circadian clock mechanism. Transcription factors, CLOCK or NPAS2 and BMAL1 or BMAL2, form the positive limb of the feedback loop, act in the form of a heterodimer and activate the transcription of core clock genes and clock-controlled genes (involved in key metabolic processes), harboring E-box elements (5'-CACGTG-3') within their promoters. The core clock genes: PER1/2/3 and CRY1/2 which are transcriptional repressors form the negative limb of the feedback loop and interact with the CLOCK|NPAS2-BMAL1|BMAL2 heterodimer inhibiting its activity and thereby negatively regulating their own expression. This heterodimer also activates nuclear receptors NR1D1/2 and RORA/B/G, which form a second feedback loop and which activate and repress BMAL1 transcription, respectively. The preferred binding motif for the CLOCK-BMAL1 heterodimer is 5'-CACGTGA-3', which contains a flanking adenine nucleotide at the 3-prime end of the canonical 6-nucleotide E-box sequence. CLOCK specifically binds to the half-site 5'-CAC-3', while BMAL1 binds to the half-site 5'-GTGA-3'. Essential for the rhythmic interaction of CLOCK with ASS1 and plays a critical role in positively regulating CLOCK-mediated acetylation of ASS1. Plays a role in protecting against lethal sepsis by limiting the expression of immune checkpoint protein CD274 in macrophages in a PKM2-dependent manner. This Gallus gallus (Chicken) protein is Basic helix-loop-helix ARNT-like protein 1 (BMAL1).